The chain runs to 346 residues: Flap endonuclease 1 (346 aa).

The interval 1 to 102 is N-domain; it reads MGVTELGKLI…AEIEERRKAK (102 aa). Positions 31, 84, 156, 158, 177, 179, and 239 each coordinate Mg(2+). The segment at 120–261 is I-domain; the sequence is EVAKYAKRAI…RALKLIWEFG (142 aa).

This sequence belongs to the XPG/RAD2 endonuclease family. FEN1 subfamily. In terms of assembly, interacts with PCNA. PCNA stimulates the nuclease activity without altering cleavage specificity. Mg(2+) serves as cofactor.

In terms of biological role, structure-specific nuclease with 5'-flap endonuclease and 5'-3' exonuclease activities involved in DNA replication and repair. During DNA replication, cleaves the 5'-overhanging flap structure that is generated by displacement synthesis when DNA polymerase encounters the 5'-end of a downstream Okazaki fragment. Binds the unpaired 3'-DNA end and kinks the DNA to facilitate 5' cleavage specificity. Cleaves one nucleotide into the double-stranded DNA from the junction in flap DNA, leaving a nick for ligation. Also involved in the base excision repair (BER) pathway. Acts as a genome stabilization factor that prevents flaps from equilibrating into structures that lead to duplications and deletions. Also possesses 5'-3' exonuclease activity on nicked or gapped double-stranded DNA. The protein is Flap endonuclease 1 of Pyrobaculum arsenaticum (strain DSM 13514 / JCM 11321 / PZ6).